Consider the following 398-residue polypeptide: Phospholipase C (398 aa).

An N-terminal signal peptide occupies residues M1 to A26. The Zn(2+) site is built by W27, H37, D82, H94, H152, D156, H162, H174, and E178. The region spanning W27–D276 is the Zn-dependent PLC domain. Positions N273 to T281 are linker. A PLAT domain is found at N282 to K398. Ca(2+) contacts are provided by G297, T298, D299, D319, N320, G322, N323, D324, and D363.

Belongs to the bacterial zinc-metallophospholipase C family. Ca(2+) serves as cofactor. It depends on Zn(2+) as a cofactor.

It is found in the secreted. It carries out the reaction a 1,2-diacyl-sn-glycero-3-phosphocholine + H2O = phosphocholine + a 1,2-diacyl-sn-glycerol + H(+). Bacterial hemolysins are exotoxins that attack blood cell membranes and cause cell rupture. Binds to eukaryotic membranes where it hydrolyzes phosphatidylcholine. This enzyme has 10-fold less activity towards sphingomyelin than its C.perfringens counterpart, is approximately 100-fold less hemolytic against mouse erythrocytes and at least 100-fold less toxic in mice. The sequence is that of Phospholipase C (plc) from Paraclostridium bifermentans (Clostridium bifermentans).